Reading from the N-terminus, the 431-residue chain is Dual-specificity RNA methyltransferase RlmN (431 aa).

A disordered region spans residues 1 to 26; that stretch reads MATASLDTARPERRAGSDPFIEKTPE. The segment covering 9–26 has biased composition (basic and acidic residues); it reads ARPERRAGSDPFIEKTPE. E138 functions as the Proton acceptor in the catalytic mechanism. A Radical SAM core domain is found at 144 to 394; the sequence is ANDRGTLCVS…VRTPRGRDIL (251 aa). C151 and C397 are joined by a disulfide. Residues C158, C162, and C165 each contribute to the [4Fe-4S] cluster site. Residues 223 to 224, S255, 277 to 279, and N354 each bind S-adenosyl-L-methionine; these read GE and SLH. Residue C397 is the S-methylcysteine intermediate of the active site.

It belongs to the radical SAM superfamily. RlmN family. Requires [4Fe-4S] cluster as cofactor.

Its subcellular location is the cytoplasm. It carries out the reaction adenosine(2503) in 23S rRNA + 2 reduced [2Fe-2S]-[ferredoxin] + 2 S-adenosyl-L-methionine = 2-methyladenosine(2503) in 23S rRNA + 5'-deoxyadenosine + L-methionine + 2 oxidized [2Fe-2S]-[ferredoxin] + S-adenosyl-L-homocysteine. The enzyme catalyses adenosine(37) in tRNA + 2 reduced [2Fe-2S]-[ferredoxin] + 2 S-adenosyl-L-methionine = 2-methyladenosine(37) in tRNA + 5'-deoxyadenosine + L-methionine + 2 oxidized [2Fe-2S]-[ferredoxin] + S-adenosyl-L-homocysteine. In terms of biological role, specifically methylates position 2 of adenine 2503 in 23S rRNA and position 2 of adenine 37 in tRNAs. m2A2503 modification seems to play a crucial role in the proofreading step occurring at the peptidyl transferase center and thus would serve to optimize ribosomal fidelity. This is Dual-specificity RNA methyltransferase RlmN from Methylobacterium sp. (strain 4-46).